The sequence spans 505 residues: Maturase K (505 aa).

Belongs to the intron maturase 2 family. MatK subfamily.

The protein localises to the plastid. Its subcellular location is the chloroplast. Functionally, usually encoded in the trnK tRNA gene intron. Probably assists in splicing its own and other chloroplast group II introns. This chain is Maturase K, found in Coffea arabica (Arabian coffee).